Consider the following 137-residue polypeptide: Basic phospholipase A2 2 (137 aa).

The N-terminal stretch at 1–11 (LVAVCVSLLGA) is a signal peptide. A propeptide spanning residues 12-19 (ANIPPQPL) is cleaved from the precursor. 7 disulfides stabilise this stretch: Cys-30/Cys-89, Cys-44/Cys-136, Cys-46/Cys-62, Cys-61/Cys-117, Cys-68/Cys-110, Cys-78/Cys-103, and Cys-96/Cys-108. The Ca(2+) site is built by Tyr-45 and Gly-47. Tyr-48 is a binding site for alpha-D-mannopyranose. A Ca(2+)-binding site is contributed by Gly-49. His-65 is a catalytic residue. Position 66 (Asp-66) interacts with Ca(2+). Asp-66 lines the alpha-D-mannopyranose pocket. Asp-111 is an active-site residue.

Belongs to the phospholipase A2 family. Group I subfamily. D49 sub-subfamily. In terms of assembly, homodimer; non-covalently linked. The cofactor is Ca(2+). Homodimerization and interaction of the catalytically important Asp-49 (here Asp-111) with mannose molecules may render this protein inactive. In terms of tissue distribution, expressed by the venom gland.

The protein localises to the secreted. It catalyses the reaction a 1,2-diacyl-sn-glycero-3-phosphocholine + H2O = a 1-acyl-sn-glycero-3-phosphocholine + a fatty acid + H(+). Snake venom phospholipase A2 (PLA2) that shows anticoagulant and neurotoxic activities. Its function is as follows. PLA2 catalyzes the calcium-dependent hydrolysis of the 2-acyl groups in 3-sn-phosphoglycerides. This Bungarus caeruleus (Indian krait) protein is Basic phospholipase A2 2.